Here is a 359-residue protein sequence, read N- to C-terminus: Probable 2-oxoacid dependent dioxygenase (359 aa).

One can recognise a Fe2OG dioxygenase domain in the interval 207 to 308 (KGLWMLCHCF…ISVACFFVHT (102 aa)). His231, Asp233, and His287 together coordinate Fe cation. The tract at residues 329-359 (PPKYRDTTSESSNHYVARKPNGNSSLDHLRI) is disordered. Over residues 349–359 (NGNSSLDHLRI) the composition is skewed to polar residues.

This sequence belongs to the iron/ascorbate-dependent oxidoreductase family. The cofactor is Fe(2+). Expressed in leaves and seeds. All cultivars with seed-only-functional allele have low to non-detectable GSL-OH expression in the leaves.

The enzyme catalyses gluconapin + AH2 + O2 = progoitrin + A + H2O. Its function is as follows. Necessary for the hydroxylation of but-3-enyl glucosinolate to 2-hydroxybut-3-enyl glucosinolate, which is toxic to insects, bacteria and nematodes, inhibits seed germination and produces bitter flavors. The chain is Probable 2-oxoacid dependent dioxygenase from Arabidopsis thaliana (Mouse-ear cress).